The chain runs to 247 residues: C-type lectin domain family 7 member A (247 aa).

Residues methionine 1–arginine 44 lie on the Cytoplasmic side of the membrane. The ITAM-like signature appears at tyrosine 15 to leucine 18. The chain crosses the membrane as a helical; Signal-anchor for type II membrane protein span at residues leucine 45–glycine 65. Residues threonine 66–methionine 247 are Extracellular-facing. A disordered region spans residues asparagine 81–threonine 105. Asparagine 91 is a glycosylation site (N-linked (GlcNAc...) asparagine). Residues serine 93–threonine 105 are compositionally biased toward polar residues. 3 cysteine pairs are disulfide-bonded: cysteine 120–cysteine 131, cysteine 148–cysteine 241, and cysteine 220–cysteine 233. The C-type lectin domain maps to tyrosine 127–glutamate 242. Arginine 146–serine 153 contacts (1,3-beta-D-glucosyl)n. A divalent metal cation is bound by residues lysine 157, aspartate 159, and glutamate 163. Residue glutamate 195 participates in (1,3-beta-D-glucosyl)n binding. Position 242 (glutamate 242) interacts with a divalent metal cation.

As to quaternary structure, homodimer. Interacts with SYK; participates in leukocyte activation in presence of fungal pathogens. Interacts with CD37; this interaction controls CLEC7A-mediated IL-6 production. In terms of processing, phosphorylated on tyrosine residues in response to beta-glucan binding. In terms of tissue distribution, detected in dendritic cells, in paracortical and medullary regions of lymph nodes, and in spleen red pulp and white pulp.

It localises to the cell membrane. Lectin that functions as a pattern recognizing receptor (PRR) specific for beta-1,3-linked and beta-1,6-linked glucans, which constitute cell wall constituents from pathogenic bacteria and fungi. Necessary for the TLR2-mediated inflammatory response and activation of NF-kappa-B: upon beta-glucan binding, recruits SYK via its ITAM motif and promotes a signaling cascade that activates some CARD domain-BCL10-MALT1 (CBM) signalosomes, leading to the activation of NF-kappa-B and MAP kinase p38 (MAPK11, MAPK12, MAPK13 and/or MAPK14) pathways which stimulate expression of genes encoding pro-inflammatory cytokines and chemokines. Enhances cytokine production in macrophages and dendritic cells. Mediates production of reactive oxygen species in the cell. Mediates phagocytosis of C.albicans conidia. Binds T-cells in a way that does not involve their surface glycans and plays a role in T-cell activation. Stimulates T-cell proliferation. Induces phosphorylation of SCIMP after binding beta-glucans. The polypeptide is C-type lectin domain family 7 member A (CLEC7A) (Macaca mulatta (Rhesus macaque)).